The chain runs to 312 residues: Olfactory receptor 2J1 (312 aa).

The Extracellular segment spans residues 1-26 (MLMKKNASFEDFFLLLGFSNWPHLEV). N6 carries N-linked (GlcNAc...) asparagine glycosylation. The chain crosses the membrane as a helical span at residues 27–50 (VLFVVILIFYLITLIGNLFIIILS). Topologically, residues 51–58 (YLDSHLHT) are cytoplasmic. The helical transmembrane segment at 59 to 80 (PMYFFLSNLSFLDLCYTTSSIP) threads the bilayer. Over 81–101 (QLLVNLWGPEKTISYAGCTVQ) the chain is Extracellular. C98 and C190 are oxidised to a cystine. Residues 102–121 (LYFVLALGTAECVLLVVMSY) traverse the membrane as a helical segment. Residues 122 to 140 (DRYAAVCRPLHYTVLMHPR) are Cytoplasmic-facing. A helical membrane pass occupies residues 141–159 (FCRLLAAASWVSGFTTSAL). The Extracellular segment spans residues 160 to 196 (HSSFTFWIPLCRHRLVDHFFCEVPALLRLSCVDTQAN). A helical transmembrane segment spans residues 197 to 220 (ELTLMVMSSIFVLIPLILILTSYG). At 221–237 (AIARAVLSMQSTTGLQK) the chain is on the cytoplasmic side. A helical transmembrane segment spans residues 238 to 260 (VLRTCGAHLMVVSLFFIPVMCMY). Topologically, residues 261–273 (LQPPSENSQDQGK) are extracellular. The chain crosses the membrane as a helical span at residues 274–293 (FIALFYTVVTPSLNPLIYTF). Over 294-312 (RNKDVRGAVKRLMGWEWGM) the chain is Cytoplasmic.

Belongs to the G-protein coupled receptor 1 family.

It localises to the cell membrane. In terms of biological role, odorant receptor. The sequence is that of Olfactory receptor 2J1 (OR2J1) from Homo sapiens (Human).